The sequence spans 196 residues: Putative adenylate kinase (196 aa).

5 residues coordinate ATP: glycine 10, glycine 12, lysine 13, threonine 14, and serine 15. The tract at residues tyrosine 30–alanine 53 is NMP. The segment at lysine 118 to glutamate 128 is LID. Arginine 119 contributes to the ATP binding site.

Belongs to the adenylate kinase family. AK6 subfamily. In terms of assembly, interacts with uS11. Not a structural component of 40S pre-ribosomes, but transiently interacts with them by binding to uS11.

The catalysed reaction is AMP + ATP = 2 ADP. It carries out the reaction ATP + H2O = ADP + phosphate + H(+). Its function is as follows. Broad-specificity nucleoside monophosphate (NMP) kinase that catalyzes the reversible transfer of the terminal phosphate group between nucleoside triphosphates and monophosphates. Also has ATPase activity. Involved in the late maturation steps of the 30S ribosomal particles, specifically 16S rRNA maturation. While NMP activity is not required for ribosome maturation, ATPase activity is. Associates transiently with small ribosomal subunit protein uS11. ATP hydrolysis breaks the interaction with uS11. May temporarily remove uS11 from the ribosome to enable a conformational change of the ribosomal RNA that is needed for the final maturation step of the small ribosomal subunit. This Methanosarcina mazei (strain ATCC BAA-159 / DSM 3647 / Goe1 / Go1 / JCM 11833 / OCM 88) (Methanosarcina frisia) protein is Putative adenylate kinase.